Reading from the N-terminus, the 295-residue chain is Calcium-regulated actin-bundling protein (295 aa).

In terms of assembly, monomer.

In terms of biological role, may contribute to the structure and reorganization of filopodia and pseudopodia accompanying cell movements. The chain is Calcium-regulated actin-bundling protein (abpB) from Dictyostelium discoideum (Social amoeba).